Here is a 96-residue protein sequence, read N- to C-terminus: Small ribosomal subunit protein bS20 (96 aa).

The tract at residues 1–27 (MAKQEVAAKKVKRPTALKRDLQNKKKR) is disordered.

It belongs to the bacterial ribosomal protein bS20 family.

Its function is as follows. Binds directly to 16S ribosomal RNA. This Protochlamydia amoebophila (strain UWE25) protein is Small ribosomal subunit protein bS20.